The chain runs to 186 residues: MKMEVIFKTDLRSSSQVVFHAGSLYNWFSVEIINSGRIVTTAIKTLLSTVKYDIVKSARIYAGQGYTEHQAQEEWNMILHVLFEEETESSASSESIHEKNDNETNECTSSFETLFEQEPPSEVPKDSKLYMLAQKTVQHIEQYGKAPDFNKVIRAHNFIQTIHGTPLKEEEKEVVRIMVIKLLKKK.

Belongs to the asfivirus phosphoprotein p30 family. Oligomer. Interacts with host HNRNPK.

The protein localises to the host cytoplasm. It localises to the host nucleus. It is found in the virion. Functionally, modifies the subcellular distribution of heterogeneous nuclear ribonucleoprotein K (HNRNPK) and may contribute to modulate HNRNPK functions related to processing and export of mRNAs during ASFV infection. Necessary for virus internalization. The polypeptide is Phosphoprotein p30 (Ornithodoros (relapsing fever ticks)).